Reading from the N-terminus, the 337-residue chain is Protein-methionine-sulfoxide reductase catalytic subunit MsrP (337 aa).

The tat-type signal signal peptide spans M1–A48. Mo-molybdopterin contacts are provided by residues N94, Y97–E98, C152, T187, N237, R242, and S253–K255.

The protein belongs to the MsrP family. Heterodimer of a catalytic subunit (MsrP) and a heme-binding subunit (MsrQ). It depends on Mo-molybdopterin as a cofactor. In terms of processing, predicted to be exported by the Tat system. The position of the signal peptide cleavage has not been experimentally proven.

Its subcellular location is the periplasm. The catalysed reaction is L-methionyl-[protein] + a quinone + H2O = L-methionyl-(S)-S-oxide-[protein] + a quinol. It carries out the reaction L-methionyl-[protein] + a quinone + H2O = L-methionyl-(R)-S-oxide-[protein] + a quinol. Part of the MsrPQ system that repairs oxidized periplasmic proteins containing methionine sulfoxide residues (Met-O), using respiratory chain electrons. Thus protects these proteins from oxidative-stress damage caused by reactive species of oxygen and chlorine generated by the host defense mechanisms. MsrPQ is essential for the maintenance of envelope integrity under bleach stress, rescuing a wide series of structurally unrelated periplasmic proteins from methionine oxidation. The catalytic subunit MsrP is non-stereospecific, being able to reduce both (R-) and (S-) diastereoisomers of methionine sulfoxide. This is Protein-methionine-sulfoxide reductase catalytic subunit MsrP from Pseudomonas aeruginosa (strain ATCC 15692 / DSM 22644 / CIP 104116 / JCM 14847 / LMG 12228 / 1C / PRS 101 / PAO1).